The primary structure comprises 793 residues: PC3-like endoprotease variant A (793 aa).

The first 29 residues, 1-29 (MNYRGIYRRRYVFVLLLLVAVVNISYGWT), serve as a signal peptide directing secretion. Positions 30 to 152 (VLKNKDYKRR…QQKILERVKR (123 aa)) are excised as a propeptide. Residues asparagine 62 and asparagine 190 are each glycosylated (N-linked (GlcNAc...) asparagine). Positions 164-486 (MWYLLNTGQA…FGRLDANAMV (323 aa)) constitute a Peptidase S8 domain. Catalysis depends on charge relay system residues aspartate 202 and histidine 242. Disulfide bonds link cysteine 259-cysteine 411 and cysteine 351-cysteine 381. Serine 419 acts as the Charge relay system in catalysis. A P/Homo B domain is found at 495–638 (LPAQRKCTAA…EERVIDTQTK (144 aa)). A disulfide bridge links cysteine 501 with cysteine 527.

It belongs to the peptidase S8 family. Furin subfamily. In terms of tissue distribution, predominantly in the body column.

Its function is as follows. Probably involved in the processing of hormone and other protein precursors at sites comprised of pairs of basic amino acid residues. This Hydra vulgaris (Hydra) protein is PC3-like endoprotease variant A.